A 99-amino-acid chain; its full sequence is NADH-quinone oxidoreductase subunit K (99 aa).

The next 3 membrane-spanning stretches (helical) occupy residues proline 3–valine 23, isoleucine 28–phenylalanine 48, and valine 59–isoleucine 79.

Belongs to the complex I subunit 4L family. As to quaternary structure, NDH-1 is composed of 14 different subunits. Subunits NuoA, H, J, K, L, M, N constitute the membrane sector of the complex.

The protein resides in the cell membrane. It catalyses the reaction a quinone + NADH + 5 H(+)(in) = a quinol + NAD(+) + 4 H(+)(out). Its function is as follows. NDH-1 shuttles electrons from NADH, via FMN and iron-sulfur (Fe-S) centers, to quinones in the respiratory chain. The immediate electron acceptor for the enzyme in this species is believed to be a menaquinone. Couples the redox reaction to proton translocation (for every two electrons transferred, four hydrogen ions are translocated across the cytoplasmic membrane), and thus conserves the redox energy in a proton gradient. The chain is NADH-quinone oxidoreductase subunit K from Saccharopolyspora erythraea (strain ATCC 11635 / DSM 40517 / JCM 4748 / NBRC 13426 / NCIMB 8594 / NRRL 2338).